The sequence spans 370 residues: Leucine-rich repeat-containing protein 19 (370 aa).

The first 24 residues, 1–24 (MKVTGITILFWPLSMILLSDKIQS), serve as a signal peptide directing secretion. Topologically, residues 25–270 (SKREVQCNFT…SEHEPLGKSW (246 aa)) are extracellular. Asn-32, Asn-37, Asn-62, and Asn-95 each carry an N-linked (GlcNAc...) asparagine glycan. LRR repeat units lie at residues 46–71 (KKDVTILDLSYNQITLNGTDTRVLQT), 72–95 (YFLLTELYLIENKVTILHNNGFGN), 96–119 (LSSLEILNICRNSIYVIQQGAFLG), 120–143 (LNKLKQLYLCQNKIEQLNADVFVP), and 145–168 (RSLKLLNLQGNLISYLDVPPLFHL). Residues 176–227 (NLWNCSCSLFNLQNWLNTSNVTLENENITMCSYPNSLQSYNIKTVPHKAECH) enclose the LRRCT domain. Residues Asn-179, Asn-192, Asn-195, Asn-202, Asn-251, and Asn-256 are each glycosylated (N-linked (GlcNAc...) asparagine). Residues 271-291 (AFLVGVVVTVLTTSLLIFIAI) form a helical membrane-spanning segment. The Cytoplasmic segment spans residues 292–370 (KCPIWYNILL…IDIHELCEEN (79 aa)).

In terms of assembly, interacts with TRAF2 and TRAF6. In terms of tissue distribution, expressed in renal collecting duct epithelial cells.

Its subcellular location is the membrane. With respect to regulation, activated by TLR ligands such as LPS, bacterial DNA and peptidoglycan. Its function is as follows. Pathogen-recognition receptor which mediates the activation of TRAF2- and TRAF6 NF-kappa-B signaling pathways and induces the expression of pro-inflammatory cytokines. In kidney, prevents infection by uropathogenic bacteria by inducing the production of cytokines, chemokines and antimicrobial substances. In gut, involved in host-microbiota interactions, plays a critical role in promoting the recruitment of immune cells and intestinal inflammation. The sequence is that of Leucine-rich repeat-containing protein 19 from Homo sapiens (Human).